Here is a 963-residue protein sequence, read N- to C-terminus: Thrombospondin-4 (963 aa).

Positions 1–26 (MPAPRAAAAAFLLLHLVLQPWQRTSA) are cleaved as a signal peptide. In terms of domain architecture, Laminin G-like spans 29 to 194 (TPQVFDLLPS…LEELKLVVRG (166 aa)). The Cell attachment site motif lies at 138 to 140 (RGD). Residues 288–327 (PTRHCDSSPCFRGVRCTDTRDGFQCGPCPDGYTGNGITCS) form the EGF-like 1 domain. Intrachain disulfides connect Cys292/Cys303, Cys297/Cys312, Cys315/Cys326, Cys332/Cys343, Cys337/Cys352, Cys355/Cys379, Cys385/Cys396, Cys390/Cys405, Cys408/Cys420, Cys426/Cys440, Cys434/Cys450, Cys452/Cys463, Cys479/Cys484, Cys489/Cys509, Cys525/Cys545, Cys548/Cys568, Cys584/Cys604, Cys607/Cys627, Cys645/Cys665, Cys685/Cys705, and Cys721/Cys942. In terms of domain architecture, EGF-like 2; calcium-binding spans 328–365 (DVDECKYHPCYPGVRCVNLAPGFRCDACPVGFTGPMVQ). The region spanning 381 to 418 (DVDECQNGACVLNSICINTLGSYRCGPCKPGYTGDQTR) is the EGF-like 3; calcium-binding domain. The region spanning 422-464 (TERSCRNPEQNPCSVHAQCIEERQGDVTCVCGVGWAGDGYVCG) is the EGF-like 4 domain. TSP type-3 repeat units follow at residues 465–497 (KDVDIDSYPDEELPCSARNCKKDNCKYVPNSGQ), 498–533 (EDADRDGIGDACDEDADGDGILNEQDNCVLTHNIDQ), 534–556 (RNSDKDIFGDACDNCRMVLNNDQ), 557–592 (KDTDGDGRGDACDDDMDGDGIKNILDNCPRVPNRDQ), 593–615 (QDRDGDDVGDACDSCPDVSNPNQ), 616–653 (SDVDNDLVGDSCDTNQDSDGDGHQDSTDNCPTVINSSQ), 654–693 (LDTDKDGIGDECDDDDDNDGIPDLVPPGPDNCRLVPNPAQ), and 694–729 (EDSNNDGVGDICEADFDQDQVIDHIDVCPENAEITL). A Cell attachment site motif is present at residues 564-566 (RGD). The disordered stretch occupies residues 579–676 (NILDNCPRVP…DDDDNDGIPD (98 aa)). N-linked (GlcNAc...) asparagine glycans are attached at residues Asn614 and Asn650. The segment covering 642 to 654 (TDNCPTVINSSQL) has biased composition (polar residues). Over residues 662 to 673 (GDECDDDDDNDG) the composition is skewed to acidic residues. One can recognise a TSP C-terminal domain in the interval 733-947 (RAYQTVVLDP…LKYRCNDTIP (215 aa)). N-linked (GlcNAc...) asparagine glycosylation is present at Asn943.

This sequence belongs to the thrombospondin family. In terms of assembly, homopentamer; disulfide-linked. Interacts with PTBP3. Interacts (via EGF-like 3; calcium-binding domain) with ATF6 and facilitates its processing, activation and nuclear translocation. Interacts with NOTCH1. Heart. Up-regulated in the heart in response to ischemic injury and pathology (at protein level). Astrocytes; expressed at high levels in subventricular zone (SVZ)-derived astrocytes and at low levels in cortical astrocytes. In response to peripheral nerve injury, significantly up-regulated in the dorsal spinal cord (at protein level).

It localises to the endoplasmic reticulum. It is found in the sarcoplasmic reticulum. Its subcellular location is the secreted. The protein resides in the extracellular space. The protein localises to the extracellular matrix. Functionally, adhesive glycoprotein that mediates cell-to-cell and cell-to-matrix interactions and is involved in various processes including cellular proliferation, migration, adhesion and attachment, inflammatory response to CNS injury, regulation of vascular inflammation and adaptive responses of the heart to pressure overload and in myocardial function and remodeling. Binds to structural extracellular matrix (ECM) proteins and modulates the ECM in response to tissue damage, contributing to cardioprotective and adaptive ECM remodeling. Plays a role in ER stress response, via its interaction with the activating transcription factor 6 alpha (ATF6) which produces adaptive ER stress response factors and protects myocardium from pressure overload. May contribute to spinal presynaptic hypersensitivity and neuropathic pain states after peripheral nerve injury. May play a role in regulating protective astrogenesis from the subventricular zone (SVZ) niche after injury in a NOTCH1-dependent manner. This chain is Thrombospondin-4 (Thbs4), found in Mus musculus (Mouse).